The following is a 103-amino-acid chain: uncharacterized protein (103 aa).

This is an uncharacterized protein from Archaeoglobus fulgidus (strain ATCC 49558 / DSM 4304 / JCM 9628 / NBRC 100126 / VC-16).